A 64-amino-acid polypeptide reads, in one-letter code: Large ribosomal subunit protein uL29 (64 aa).

It belongs to the universal ribosomal protein uL29 family.

In Lacticaseibacillus paracasei (strain ATCC 334 / BCRC 17002 / CCUG 31169 / CIP 107868 / KCTC 3260 / NRRL B-441) (Lactobacillus paracasei), this protein is Large ribosomal subunit protein uL29.